Reading from the N-terminus, the 183-residue chain is Dual-action ribosomal maturation protein DarP (183 aa).

The tract at residues 1 to 21 (MKQKPEDWLNDVPDNQEDDED) is disordered.

It belongs to the DarP family.

It is found in the cytoplasm. Its function is as follows. Member of a network of 50S ribosomal subunit biogenesis factors which assembles along the 30S-50S interface, preventing incorrect 23S rRNA structures from forming. Promotes peptidyl transferase center (PTC) maturation. The chain is Dual-action ribosomal maturation protein DarP from Pectobacterium atrosepticum (strain SCRI 1043 / ATCC BAA-672) (Erwinia carotovora subsp. atroseptica).